Consider the following 105-residue polypeptide: Urease subunit beta (105 aa).

It belongs to the urease beta subunit family. In terms of assembly, heterotrimer of UreA (gamma), UreB (beta) and UreC (alpha) subunits. Three heterotrimers associate to form the active enzyme.

It is found in the cytoplasm. The enzyme catalyses urea + 2 H2O + H(+) = hydrogencarbonate + 2 NH4(+). It participates in nitrogen metabolism; urea degradation; CO(2) and NH(3) from urea (urease route): step 1/1. In Shewanella halifaxensis (strain HAW-EB4), this protein is Urease subunit beta.